Consider the following 245-residue polypeptide: 6-carboxyhexanoate--CoA ligase (245 aa).

It belongs to the BioW family. In terms of assembly, homodimer. It depends on Mg(2+) as a cofactor.

It carries out the reaction heptanedioate + ATP + CoA = 6-carboxyhexanoyl-CoA + AMP + diphosphate. The protein operates within metabolic intermediate metabolism; pimeloyl-CoA biosynthesis; pimeloyl-CoA from pimelate: step 1/1. Its function is as follows. Catalyzes the transformation of pimelate into pimeloyl-CoA with concomitant hydrolysis of ATP to AMP. In Sulfurihydrogenibium sp. (strain YO3AOP1), this protein is 6-carboxyhexanoate--CoA ligase.